Consider the following 237-residue polypeptide: Glutathione S-transferase L1 (237 aa).

Positions 29 to 110 (GTTRLYISYT…YVDSNFDGPS (82 aa)) constitute a GST N-terminal domain. Glutathione is bound by residues 39 to 40 (CP), 67 to 68 (NR), 81 to 82 (KV), and 94 to 95 (ES). The 121-residue stretch at 112–232 (YPEDSAKREF…KTDSEYVVNY (121 aa)) folds into the GST C-terminal domain.

It belongs to the GST superfamily. Lambda family.

It is found in the cytoplasm. It localises to the cytosol. The enzyme catalyses RX + glutathione = an S-substituted glutathione + a halide anion + H(+). Its function is as follows. Catalyzes the glutathione-dependent reduction of S-glutathionylquercetin to quercetin. In vitro, possesses glutathione-dependent thiol transferase activity toward 2-hydroxyethyl disulfide (HED). This is Glutathione S-transferase L1 (GSTL1) from Arabidopsis thaliana (Mouse-ear cress).